The sequence spans 688 residues: Elongation factor G (688 aa).

In terms of domain architecture, tr-type G spans 8–282 (EKFRNIGIMA…AVVDFMPSPL (275 aa)). Residues 17–24 (AHIDAGKT), 81–85 (DTPGH), and 135–138 (NKMD) contribute to the GTP site. A disordered region spans residues 282 to 305 (LDIPPIKGTDPETGEETDRPADDN).

The protein belongs to the TRAFAC class translation factor GTPase superfamily. Classic translation factor GTPase family. EF-G/EF-2 subfamily.

The protein resides in the cytoplasm. Functionally, catalyzes the GTP-dependent ribosomal translocation step during translation elongation. During this step, the ribosome changes from the pre-translocational (PRE) to the post-translocational (POST) state as the newly formed A-site-bound peptidyl-tRNA and P-site-bound deacylated tRNA move to the P and E sites, respectively. Catalyzes the coordinated movement of the two tRNA molecules, the mRNA and conformational changes in the ribosome. This is Elongation factor G from Clostridium kluyveri (strain NBRC 12016).